Reading from the N-terminus, the 121-residue chain is Cu-Zn superoxide dismutase-like protein (121 aa).

Cysteines 48 and 98 form a disulfide.

Belongs to the Cu-Zn superoxide dismutase family.

Its subcellular location is the host cytoplasm. Functionally, virion protein with no enzymatic activity. The polypeptide is Cu-Zn superoxide dismutase-like protein (Vaccinia virus (strain Ankara) (VACV)).